Reading from the N-terminus, the 259-residue chain is 5'-nucleotidase SurE 1 (259 aa).

Aspartate 16, aspartate 17, serine 48, and asparagine 101 together coordinate a divalent metal cation.

Belongs to the SurE nucleotidase family. It depends on a divalent metal cation as a cofactor.

The protein resides in the cytoplasm. The enzyme catalyses a ribonucleoside 5'-phosphate + H2O = a ribonucleoside + phosphate. Its function is as follows. Nucleotidase that shows phosphatase activity on nucleoside 5'-monophosphates. The protein is 5'-nucleotidase SurE 1 of Burkholderia lata (strain ATCC 17760 / DSM 23089 / LMG 22485 / NCIMB 9086 / R18194 / 383).